We begin with the raw amino-acid sequence, 159 residues long: 2-C-methyl-D-erythritol 2,4-cyclodiphosphate synthase (159 aa).

A divalent metal cation is bound by residues Asp8 and His10. Residues 8-10 and 34-35 contribute to the 4-CDP-2-C-methyl-D-erythritol 2-phosphate site; these read DVH and HS. Residue His42 coordinates a divalent metal cation. Residues 56–58, 61–65, 100–106, 132–135, Phe139, and Arg142 each bind 4-CDP-2-C-methyl-D-erythritol 2-phosphate; these read DIG, FPDTD, AQAPKML, and TTTE.

It belongs to the IspF family. Homotrimer. Requires a divalent metal cation as cofactor.

It carries out the reaction 4-CDP-2-C-methyl-D-erythritol 2-phosphate = 2-C-methyl-D-erythritol 2,4-cyclic diphosphate + CMP. It functions in the pathway isoprenoid biosynthesis; isopentenyl diphosphate biosynthesis via DXP pathway; isopentenyl diphosphate from 1-deoxy-D-xylulose 5-phosphate: step 4/6. In terms of biological role, involved in the biosynthesis of isopentenyl diphosphate (IPP) and dimethylallyl diphosphate (DMAPP), two major building blocks of isoprenoid compounds. Catalyzes the conversion of 4-diphosphocytidyl-2-C-methyl-D-erythritol 2-phosphate (CDP-ME2P) to 2-C-methyl-D-erythritol 2,4-cyclodiphosphate (ME-CPP) with a corresponding release of cytidine 5-monophosphate (CMP). This Salmonella typhimurium (strain LT2 / SGSC1412 / ATCC 700720) protein is 2-C-methyl-D-erythritol 2,4-cyclodiphosphate synthase.